Reading from the N-terminus, the 181-residue chain is Ribonuclease HII (181 aa).

The 181-residue stretch at Met-1–Ile-181 folds into the RNase H type-2 domain. Residues Asp-6, Glu-7, and Asp-98 each coordinate a divalent metal cation.

The protein belongs to the RNase HII family. Mn(2+) is required as a cofactor. The cofactor is Mg(2+).

Its subcellular location is the cytoplasm. It carries out the reaction Endonucleolytic cleavage to 5'-phosphomonoester.. In terms of biological role, endonuclease that specifically degrades the RNA of RNA-DNA hybrids. This Borrelia garinii subsp. bavariensis (strain ATCC BAA-2496 / DSM 23469 / PBi) (Borreliella bavariensis) protein is Ribonuclease HII.